A 289-amino-acid chain; its full sequence is F-actin-capping protein subunit beta (289 aa).

The segment at 73–110 is disordered; that stretch reads RSPWSNQFDPPLEGGNQGGSGGDGEGDGGEGGAAGSIM. Positions 87–106 are enriched in gly residues; that stretch reads GNQGGSGGDGEGDGGEGGAA.

This sequence belongs to the F-actin-capping protein beta subunit family. In terms of assembly, component of the F-actin capping complex, composed of a heterodimer of an alpha and a beta subunit.

It localises to the cytoplasm. The protein localises to the cytoskeleton. It is found in the actin patch. Its function is as follows. F-actin-capping proteins bind in a Ca(2+)-independent manner to the fast growing ends of actin filaments (barbed end) thereby blocking the exchange of subunits at these ends. Unlike other capping proteins (such as gelsolin and severin), these proteins do not sever actin filaments. The chain is F-actin-capping protein subunit beta (fac-2) from Neurospora crassa (strain ATCC 24698 / 74-OR23-1A / CBS 708.71 / DSM 1257 / FGSC 987).